The primary structure comprises 411 residues: Protein Brevis radix-like 2 (411 aa).

2 disordered regions span residues Lys10–Thr31 and Ala103–Glu149. The segment covering Ala20 to Thr31 has biased composition (polar residues). The span at Gly136–Glu149 shows a compositional bias: acidic residues. One can recognise a BRX 1 domain in the interval Arg161–Asn217. Disordered regions lie at residues Ser245–Ala294 and Ala324–Ser346. Residues Ser276–Ala294 are compositionally biased toward low complexity. The BRX 2 domain occupies Thr356 to Leu411.

The protein belongs to the BRX family.

The protein localises to the nucleus. This is Protein Brevis radix-like 2 (BRXL2) from Oryza sativa subsp. japonica (Rice).